The primary structure comprises 104 residues: Large ribosomal subunit protein uL24 (104 aa).

It belongs to the universal ribosomal protein uL24 family. In terms of assembly, part of the 50S ribosomal subunit.

Its function is as follows. One of two assembly initiator proteins, it binds directly to the 5'-end of the 23S rRNA, where it nucleates assembly of the 50S subunit. In terms of biological role, one of the proteins that surrounds the polypeptide exit tunnel on the outside of the subunit. This Caulobacter sp. (strain K31) protein is Large ribosomal subunit protein uL24.